Reading from the N-terminus, the 78-residue chain is Delta-conotoxin TxVIA (78 aa).

Residues 1–22 form the signal peptide; that stretch reads MKLTCMMIVAVLFLTAWTFATA. Positions 23–49 are excised as a propeptide; the sequence is DDSGNGLENLFSNAHHQMKNPEASKLN. Intrachain disulfides connect Cys-53–Cys-68, Cys-60–Cys-72, and Cys-67–Cys-77. Methionine sulfoxide; partial is present on Met-59.

This sequence belongs to the conotoxin O1 superfamily. Expressed by the venom duct. Is present in all duct parts with a highest content in part 4 (distal part near the pharynx).

It localises to the secreted. Its function is as follows. Delta-conotoxins bind to site 6 of voltage-gated sodium channels (Nav) and inhibit the inactivation process. Binding of this toxin is strongly calcium-dependent but not voltage-dependent. The binding site is most likely on the extracellular side of the sodium channel. Binds receptor sites on both mollusk and rat central nervous system, but despite its high affinity binding to rat sodium channel, it has no functional effect in vivo and in vitro on it. Also has no effect on Gambusia fish. Is important in mollusk for the paralysis of the prey. Upon injection of the peptide, a subordinate lobster assumes an exaggerated dominant posture (of a 'King-Kong' lobster!). The polypeptide is Delta-conotoxin TxVIA (Conus textile (Cloth-of-gold cone)).